A 166-amino-acid polypeptide reads, in one-letter code: NADPH-dependent 7-cyano-7-deazaguanine reductase (166 aa).

The active-site Thioimide intermediate is Cys57. Asp64 serves as the catalytic Proton donor. Substrate-binding positions include Val79–Ser81 and His98–Glu99.

This sequence belongs to the GTP cyclohydrolase I family. QueF type 1 subfamily.

The protein resides in the cytoplasm. The enzyme catalyses 7-aminomethyl-7-carbaguanine + 2 NADP(+) = 7-cyano-7-deazaguanine + 2 NADPH + 3 H(+). It participates in tRNA modification; tRNA-queuosine biosynthesis. In terms of biological role, catalyzes the NADPH-dependent reduction of 7-cyano-7-deazaguanine (preQ0) to 7-aminomethyl-7-deazaguanine (preQ1). This Staphylococcus aureus (strain JH1) protein is NADPH-dependent 7-cyano-7-deazaguanine reductase.